The sequence spans 265 residues: Pro-opiomelanocortin (265 aa).

An N-terminal signal peptide occupies residues 1-26 (MPRLCSSRSGALLLALLLQASMEVRG). Cystine bridges form between C28–C50 and C34–C46. An O-linked (GalNAc...) threonine glycan is attached at T71. The residue at position 87 (F87) is a Phenylalanine amide. The segment at 89–138 (RRNGSSSSGVGGAAQKREEEVAVGEGPGPRGDDAETGPREDKRSYSMEHF) is disordered. The N-linked (GlcNAc...) asparagine glycan is linked to N91. The propeptide occupies 106-129 (EEEVAVGEGPGPRGDDAETGPRED). Residues 118 to 138 (RGDDAETGPREDKRSYSMEHF) are compositionally biased toward basic and acidic residues. S132 is modified (N-acetylserine; in Corticotropin). Valine amide is present on V144. S162 bears the Phosphoserine mark. E173 is subject to Pyrrolidone carboxylic acid (Glu); partial. Y200 is subject to Sulfotyrosine. Residues 209 to 240 (EAAEKKDSGPYKMEHFRWGSPPKDKRYGGFMT) are disordered. Basic and acidic residues predominate over residues 210–235 (AAEKKDSGPYKMEHFRWGSPPKDKRY).

The protein belongs to the POMC family. Specific enzymatic cleavages at paired basic residues yield the different active peptides. ACTH and MSH are produced by the pituitary gland.

It is found in the secreted. Its function is as follows. Stimulates the adrenal glands to release cortisol. Anorexigenic peptide. Increases the pigmentation of skin by increasing melanin production in melanocytes. Functionally, endogenous orexigenic opiate. In terms of biological role, endogenous opiate. The protein is Pro-opiomelanocortin (POMC) of Bos taurus (Bovine).